Consider the following 290-residue polypeptide: ATP synthase subunit a (290 aa).

Helical transmembrane passes span 44–64, 104–124, 161–181, 194–214, 233–253, and 260–280; these read AFHV…ILLF, VIAP…AIDL, LSVF…GGFI, ILVQ…TLVA, VFIL…GMGV, and AVFH…LTIV.

The protein belongs to the ATPase A chain family. F-type ATPases have 2 components, CF(1) - the catalytic core - and CF(0) - the membrane proton channel. CF(1) has five subunits: alpha(3), beta(3), gamma(1), delta(1), epsilon(1). CF(0) has three main subunits: a(1), b(2) and c(9-12). The alpha and beta chains form an alternating ring which encloses part of the gamma chain. CF(1) is attached to CF(0) by a central stalk formed by the gamma and epsilon chains, while a peripheral stalk is formed by the delta and b chains.

Its subcellular location is the cell inner membrane. In terms of biological role, key component of the proton channel; it plays a direct role in the translocation of protons across the membrane. The chain is ATP synthase subunit a from Pseudomonas fluorescens (strain ATCC BAA-477 / NRRL B-23932 / Pf-5).